The primary structure comprises 157 residues: 3-hydroxyacyl-[acyl-carrier-protein] dehydratase FabZ (157 aa).

The active site involves H58.

This sequence belongs to the thioester dehydratase family. FabZ subfamily.

The protein resides in the cytoplasm. The enzyme catalyses a (3R)-hydroxyacyl-[ACP] = a (2E)-enoyl-[ACP] + H2O. Its function is as follows. Involved in unsaturated fatty acids biosynthesis. Catalyzes the dehydration of short chain beta-hydroxyacyl-ACPs and long chain saturated and unsaturated beta-hydroxyacyl-ACPs. The chain is 3-hydroxyacyl-[acyl-carrier-protein] dehydratase FabZ from Brucella ovis (strain ATCC 25840 / 63/290 / NCTC 10512).